Here is a 196-residue protein sequence, read N- to C-terminus: Carnitine operon protein CaiE (196 aa).

Residues 177-196 (RQMEENRPRLQGTTDVMPKR) form a disordered region.

Belongs to the transferase hexapeptide repeat family.

It participates in amine and polyamine metabolism; carnitine metabolism. In terms of biological role, overproduction of CaiE stimulates the activity of CaiB and CaiD. This Escherichia coli O17:K52:H18 (strain UMN026 / ExPEC) protein is Carnitine operon protein CaiE.